Here is a 150-residue protein sequence, read N- to C-terminus: uncharacterized protein (150 aa).

The span at methionine 1–glycine 19 shows a compositional bias: low complexity. Disordered stretches follow at residues methionine 1 to threonine 21 and glutamate 85 to glutamate 131. Over residues arginine 106–valine 115 the composition is skewed to pro residues.

This is an uncharacterized protein from Schizosaccharomyces pombe (strain 972 / ATCC 24843) (Fission yeast).